The following is a 565-amino-acid chain: Oxygen-dependent choline dehydrogenase (565 aa).

An FAD-binding site is contributed by 6 to 35; it reads DYIIIGAGSAGNVLATRLTEDADVSVLLLE. His475 (proton acceptor) is an active-site residue. Positions 541-565 are disordered; sequence RSNAPYFVAGERPVRGQPQRAVSAA.

This sequence belongs to the GMC oxidoreductase family. Requires FAD as cofactor.

The catalysed reaction is choline + A = betaine aldehyde + AH2. It catalyses the reaction betaine aldehyde + NAD(+) + H2O = glycine betaine + NADH + 2 H(+). It participates in amine and polyamine biosynthesis; betaine biosynthesis via choline pathway; betaine aldehyde from choline (cytochrome c reductase route): step 1/1. Involved in the biosynthesis of the osmoprotectant glycine betaine. Catalyzes the oxidation of choline to betaine aldehyde and betaine aldehyde to glycine betaine at the same rate. This chain is Oxygen-dependent choline dehydrogenase, found in Ectopseudomonas mendocina (strain ymp) (Pseudomonas mendocina).